A 244-amino-acid chain; its full sequence is 5-oxoprolinase subunit A (244 aa).

It belongs to the LamB/PxpA family. As to quaternary structure, forms a complex composed of PxpA, PxpB and PxpC.

It carries out the reaction 5-oxo-L-proline + ATP + 2 H2O = L-glutamate + ADP + phosphate + H(+). Functionally, catalyzes the cleavage of 5-oxoproline to form L-glutamate coupled to the hydrolysis of ATP to ADP and inorganic phosphate. The sequence is that of 5-oxoprolinase subunit A from Citrobacter koseri (strain ATCC BAA-895 / CDC 4225-83 / SGSC4696).